The sequence spans 357 residues: A-type ATP synthase subunit C (357 aa).

It belongs to the V-ATPase V0D/AC39 subunit family. Has multiple subunits with at least A(3), B(3), C, D, E, F, H, I and proteolipid K(x).

The protein localises to the cell membrane. In terms of biological role, component of the A-type ATP synthase that produces ATP from ADP in the presence of a proton gradient across the membrane. This chain is A-type ATP synthase subunit C, found in Methanococcoides burtonii (strain DSM 6242 / NBRC 107633 / OCM 468 / ACE-M).